Consider the following 200-residue polypeptide: UPF0301 protein BOV_0485 (200 aa).

Belongs to the UPF0301 (AlgH) family.

This Brucella ovis (strain ATCC 25840 / 63/290 / NCTC 10512) protein is UPF0301 protein BOV_0485.